The chain runs to 725 residues: Eukaryotic translation initiation factor 3 subunit B (725 aa).

S23 carries the post-translational modification Phosphoserine. Residues 39–129 form the RRM domain; the sequence is TVVVIEGAPV…HTFVVRKLNQ (91 aa). S135 carries the phosphoserine modification. T136 is modified (phosphothreonine). WD repeat units follow at residues 190–229, 304–344, and 347–386; these read DREN…MCAR, DGKK…LVDK, and IKID…QPAR. The stretch at 630–671 forms a coiled coil; that stretch reads LTKEDMKKIRKKLKDYNRLFDEEDIAEQSSANRELAARRRQL.

It belongs to the eIF-3 subunit B family. In terms of assembly, component of the eukaryotic translation initiation factor 3 (eIF-3) complex. The eIF-3 complex appears to include tif32/eif3a, SPAC25G10.08/eif3b, tif33/eif3c, SPBC4C3.07/eif3f, tif35/eif3g and sum1/eif3i. This set of common subunits may also associate exclusively with either moe1/eif3d and int6/eif3e, or with SPAC821.05/eif3h and SPAC1751.03/eif3m. The eIF-3 complex may also include SPAC3A12.13c/eif3j.

It localises to the cytoplasm. In terms of biological role, RNA-binding component of the eukaryotic translation initiation factor 3 (eIF-3) complex, which is involved in protein synthesis of a specialized repertoire of mRNAs and, together with other initiation factors, stimulates binding of mRNA and methionyl-tRNAi to the 40S ribosome. The eIF-3 complex specifically targets and initiates translation of a subset of mRNAs involved in cell proliferation. This chain is Eukaryotic translation initiation factor 3 subunit B, found in Schizosaccharomyces pombe (strain 972 / ATCC 24843) (Fission yeast).